Reading from the N-terminus, the 469-residue chain is Glutamate--tRNA ligase 1 (469 aa).

A 'HIGH' region motif is present at residues 10 to 20 (PSPTGYLHIGG). Cys-99, Cys-101, Cys-126, and Asp-128 together coordinate Zn(2+). The short motif at 237-241 (RLSKR) is the 'KMSKS' region element. Residue Lys-240 coordinates ATP.

Belongs to the class-I aminoacyl-tRNA synthetase family. Glutamate--tRNA ligase type 1 subfamily. In terms of assembly, monomer. Requires Zn(2+) as cofactor.

The protein localises to the cytoplasm. It carries out the reaction tRNA(Glu) + L-glutamate + ATP = L-glutamyl-tRNA(Glu) + AMP + diphosphate. Its function is as follows. Catalyzes the attachment of glutamate to tRNA(Glu) in a two-step reaction: glutamate is first activated by ATP to form Glu-AMP and then transferred to the acceptor end of tRNA(Glu). This chain is Glutamate--tRNA ligase 1, found in Coxiella burnetii (strain RSA 331 / Henzerling II).